A 710-amino-acid polypeptide reads, in one-letter code: Cyclomaltodextrin glucanotransferase (710 aa).

An N-terminal signal peptide occupies residues 1–27 (MKKTFKLILVLMLSLTLVFGLTAPIQA). Residues Asp54, Asn56, Asn59, Asn60, Gly78, and Asp80 each coordinate Ca(2+). 128 to 129 (YW) lines the substrate pocket. A Ca(2+)-binding site is contributed by Asn167. A substrate-binding site is contributed by His168. Ile218 provides a ligand contact to Ca(2+). A substrate-binding site is contributed by 221–224 (NLFD). Residue Asp227 coordinates Ca(2+). Arg255 is a substrate binding site. The Nucleophile role is filled by Asp257. Residue 260 to 261 (KH) participates in substrate binding. His261 is a Ca(2+) binding site. Glu285 serves as the catalytic Proton donor. 3 residues coordinate substrate: His355, Asp398, and Arg402. The IPT/TIG domain occupies 526–603 (PLIGHVGPTM…GATSNTYNNI (78 aa)). Residues 605-710 (ILTGNQICVR…TGTVIVNWQQ (106 aa)) form the CBM20 domain.

This sequence belongs to the glycosyl hydrolase 13 family. Ca(2+) is required as a cofactor.

The protein localises to the secreted. It catalyses the reaction Cyclizes part of a (1-&gt;4)-alpha-D-glucan chain by formation of a (1-&gt;4)-alpha-D-glucosidic bond.. Degrades starch to alpha-, beta-, and gamma-cyclodextrins, as well as linear sugars. The protein is Cyclomaltodextrin glucanotransferase (amyA) of Thermoanaerobacterium thermosulfurigenes (Clostridium thermosulfurogenes).